A 1454-amino-acid polypeptide reads, in one-letter code: Probable cleavage and polyadenylation specificity factor subunit 1 (1454 aa).

The interval 810–843 (EEKEKKAKQTAAQEKEKETEKKKDDAKNEEDQVN) is disordered. Residues 812–843 (KEKKAKQTAAQEKEKETEKKKDDAKNEEDQVN) are compositionally biased toward basic and acidic residues.

It belongs to the CPSF1 family. In terms of assembly, CPSF is a heterotetramer composed of four distinct subunits 160 (cpsf-1), 100 (cpsf-2), 70 (cpsf-3), and 30 kDa (cpsf-4).

Its subcellular location is the nucleus. Its function is as follows. CPSF plays a key role in pre-mRNA 3'-end formation, recognizing the AAUAAA signal sequence and interacting with poly(A)polymerase and other factors to bring about cleavage and poly(A) addition. This subunit is involved in the RNA recognition step of the polyadenylation reaction. This is Probable cleavage and polyadenylation specificity factor subunit 1 from Caenorhabditis briggsae.